The chain runs to 462 residues: Bifunctional protein GlmU (462 aa).

Residues 1-230 (MVNKNAIILA…FEESMGVNDR (230 aa)) form a pyrophosphorylase region. UDP-N-acetyl-alpha-D-glucosamine contacts are provided by residues 9 to 12 (LAAG), lysine 23, glutamine 73, 78 to 79 (GT), 101 to 103 (SGD), glycine 140, glutamate 155, asparagine 170, and asparagine 228. Aspartate 103 is a binding site for Mg(2+). Residue asparagine 228 participates in Mg(2+) binding. Residues 231–251 (VALSQATKVMRQRINTAHMRN) form a linker region. The segment at 252 to 462 (GVTLIDPEST…LPVAKDEEWQ (211 aa)) is N-acetyltransferase. Residues arginine 333 and lysine 351 each contribute to the UDP-N-acetyl-alpha-D-glucosamine site. Histidine 363 serves as the catalytic Proton acceptor. Residues tyrosine 366 and asparagine 377 each coordinate UDP-N-acetyl-alpha-D-glucosamine. Acetyl-CoA contacts are provided by residues 386–387 (NY), serine 405, alanine 423, and arginine 440.

It in the N-terminal section; belongs to the N-acetylglucosamine-1-phosphate uridyltransferase family. In the C-terminal section; belongs to the transferase hexapeptide repeat family. In terms of assembly, homotrimer. Mg(2+) is required as a cofactor.

Its subcellular location is the cytoplasm. It catalyses the reaction alpha-D-glucosamine 1-phosphate + acetyl-CoA = N-acetyl-alpha-D-glucosamine 1-phosphate + CoA + H(+). It carries out the reaction N-acetyl-alpha-D-glucosamine 1-phosphate + UTP + H(+) = UDP-N-acetyl-alpha-D-glucosamine + diphosphate. It functions in the pathway nucleotide-sugar biosynthesis; UDP-N-acetyl-alpha-D-glucosamine biosynthesis; N-acetyl-alpha-D-glucosamine 1-phosphate from alpha-D-glucosamine 6-phosphate (route II): step 2/2. The protein operates within nucleotide-sugar biosynthesis; UDP-N-acetyl-alpha-D-glucosamine biosynthesis; UDP-N-acetyl-alpha-D-glucosamine from N-acetyl-alpha-D-glucosamine 1-phosphate: step 1/1. Its pathway is bacterial outer membrane biogenesis; LPS lipid A biosynthesis. Functionally, catalyzes the last two sequential reactions in the de novo biosynthetic pathway for UDP-N-acetylglucosamine (UDP-GlcNAc). The C-terminal domain catalyzes the transfer of acetyl group from acetyl coenzyme A to glucosamine-1-phosphate (GlcN-1-P) to produce N-acetylglucosamine-1-phosphate (GlcNAc-1-P), which is converted into UDP-GlcNAc by the transfer of uridine 5-monophosphate (from uridine 5-triphosphate), a reaction catalyzed by the N-terminal domain. The protein is Bifunctional protein GlmU of Latilactobacillus sakei subsp. sakei (strain 23K) (Lactobacillus sakei subsp. sakei).